A 394-amino-acid polypeptide reads, in one-letter code: Putative FNIP repeat-containing protein R636 (394 aa).

FNIP repeat units lie at residues 126-167 (FNKS…FSVY), 168-207 (FDQPVVGYLPTRLTHLIFGTDFNQPIKGALPDTLEYLYFG), and 210-250 (FNQP…IFEA).

The protein is Putative FNIP repeat-containing protein R636 of Acanthamoeba polyphaga mimivirus (APMV).